The primary structure comprises 226 residues: 7-cyano-7-deazaguanine synthase (226 aa).

8–18 (LSGGLDSTTVL) is an ATP binding site. Zn(2+)-binding residues include cysteine 190, cysteine 198, cysteine 201, and cysteine 204.

Belongs to the QueC family. Homodimer. It depends on Zn(2+) as a cofactor.

It catalyses the reaction 7-carboxy-7-deazaguanine + NH4(+) + ATP = 7-cyano-7-deazaguanine + ADP + phosphate + H2O + H(+). It participates in purine metabolism; 7-cyano-7-deazaguanine biosynthesis. Catalyzes the ATP-dependent conversion of 7-carboxy-7-deazaguanine (CDG) to 7-cyano-7-deazaguanine (preQ(0)). The protein is 7-cyano-7-deazaguanine synthase of Clostridium kluyveri (strain ATCC 8527 / DSM 555 / NBRC 12016 / NCIMB 10680 / K1).